The sequence spans 703 residues: Neoverrucotoxin subunit alpha (703 aa).

An N-acetylserine modification is found at S2. In terms of domain architecture, B30.2/SPRY spans 508–703 (PRMPFVQGYK…RFDHGTVRLL (196 aa)).

The protein belongs to the SNTX/VTX toxin family. Heterodimer of alpha and beta subunits. Not glycosylated. In terms of processing, four intrachain disulfide linkages are present in the heterodimer. No interchain disulfide bound links the two subunits. Expressed by the venom gland.

The protein resides in the secreted. Functionally, has hemolytic and lethal activities. Its hemolytic activity is inhibited by anionic lipids, especially potently by cardiolipin. This Synanceia verrucosa (Reef stonefish) protein is Neoverrucotoxin subunit alpha.